A 197-amino-acid polypeptide reads, in one-letter code: Putative RNA-binding protein EEED8.12 (197 aa).

In terms of domain architecture, RRM spans 61 to 138 (KSVFIGNVDF…RPIVVTAKRT (78 aa)). Residues 142–166 (GMGHGVRGSSRGTFGRGRGAARGAP) are disordered.

In Caenorhabditis elegans, this protein is Putative RNA-binding protein EEED8.12.